The sequence spans 1175 residues: MPLPFGLKLKRTRRYTVSSKSCLVARIQLLNNEFVEFTLSVESTGQESLEAVAQRLELREITYFSLWYYNKQNQRRWVDLEKPLKKQLDKHALEPTVYFGVVFYVPSVSQLQQEITRYQYYLQLKKDVLEGNLPCTLEQAIQLAGLAVQADFGDFDQYESQDFLQKFALLPVGWLQDEKLLEEAAQKVALLHQKYRGLTAPEAEMLYMQEVERMDGYGEESYPAKDSQGSDISIGACLDGIFVKHKNGRPPVVFRWHDIANMSHNKSFFALELANKEETIQFQTEDMETAKYVWRLCVARHKFYRLNQCNLQTQAATLNSVRRGSSSRMSLPKPQPYAMPPPPQLHYNGHYTEPFASSQDNVFVPNKNGFYCHSQTSLDRTQIDLSGRIRNGSVYSAHSTNSLNTPQPYLQPSPMSSNPSIPGSDVMRPDYIPSHRHSALIPPSYRPTPDYESVMKRLNRGMVHADRHSHSLRNLNIGSSYAYSRPDALVYSQPEIREHPHLASPQSAHYPFNLNYSFHSQAPYPYPVERRPVVGAVSVPELTNVQLQAQDYPAPNIMRTQVYRPPPPYPYPRPANSTPDLSRHLYISSSNPDLITRRVHHSVQTFQEDSLPVAHSLQEVSEPLTAARHAHLQKRNSIEIAGLTHGFEGLRLKEETMSASAADVAPRTFSAGSQSSVFSDKVKQEGTEEQGSGGYSHKKSLSDATMLIHSSEEDEDLEDDSSREHAVSEPRLTAAFSQEQQLNYPCASVTPVTGPLHIFEPKSHVTEPEKRAKDISPVHLVMETHQPRRHGLLTPSMSESDLTTSGRYRARRDSLKKRPVSDLLSGKKNTVEGLPPLGGMKKTRADAKKIGPLKLAALNGLSLSRLPLPDEGKEVSTRATNDERCKVLEQRLEQGTVFTEYERILKKRLVDGECSTARLPENAERNRFQDVLPYDDARVELVPTKENNTGYINASHIKVSVSGIEWDYIATQGPLQNTCQDFWQMVWEQGVAIIAMVTAEEEGGREKSFRYWPRLGSRHNTVTYGRFKITTRFRTDSGCYATTGLKMKHLLTGQERTVWHLQYTDWPEHGCPEDLKGFLSYLEEIQSVRRHTNSTSEPRSPNPPLLVHCSAGVGRTGVVILSEIMVACLEHNEVLDIPRVLELLRQQRMMLVQTLSQYTFVYRVLIQFLKSSRLI.

The FERM domain maps to 23-308; the sequence is LVARIQLLNN…ARHKFYRLNQ (286 aa). Over residues 395–421 the composition is skewed to polar residues; the sequence is YSAHSTNSLNTPQPYLQPSPMSSNPSI. Residues 395 to 445 form a disordered region; it reads YSAHSTNSLNTPQPYLQPSPMSSNPSIPGSDVMRPDYIPSHRHSALIPPSY. Ser577, Ser589, Ser590, Ser637, Ser673, Ser710, Ser711, Ser798, Ser800, and Ser805 each carry phosphoserine. Positions 663–702 are disordered; the sequence is DVAPRTFSAGSQSSVFSDKVKQEGTEEQGSGGYSHKKSLS. In terms of domain architecture, Tyrosine-protein phosphatase spans 897 to 1168; the sequence is VFTEYERILK…TFVYRVLIQF (272 aa). Substrate contacts are provided by residues Glu1068, 1109 to 1115, and Gln1153; that span reads CSAGVGR. Cys1109 (phosphocysteine intermediate) is an active-site residue.

This sequence belongs to the protein-tyrosine phosphatase family. Non-receptor class subfamily. In terms of tissue distribution, particularly abundantly in adrenal glands.

It localises to the cytoplasm. It is found in the cytoskeleton. The catalysed reaction is O-phospho-L-tyrosyl-[protein] + H2O = L-tyrosyl-[protein] + phosphate. The chain is Tyrosine-protein phosphatase non-receptor type 21 (Ptpn21) from Rattus norvegicus (Rat).